An 880-amino-acid polypeptide reads, in one-letter code: MKQLTGAQIRQMFLDFFQEKGHAVEPSASLVPHEDPSLLWINSGVATLKKYFDGRVIPQNPRITNAQKSIRTNDIENVGKTARHHTFFEMLGNFSIGDYFKEEAITWAWEFLTSDKWIGFDKELLSVTIHPEDEEAFTIWNEKMGVPKERIIRLEENFWDIGEGPSGPNTEIFYDRGESYGNDFSDPELYPGGENERYLEVWNLVFSQFNHNPDGSYTPLPKKNIDTGMGLERMTSIVQDVPTNFDTDLFMPMIGATESISGEKYRNGDLEKDMAFKVIADHIRTVTFAVGDGALPSNEGRGYVLRRLLRRAVRYSKKLNINRPFMFELVPVVGEVMKDFYPEVLEKKDFIAKVVKNEEERFHETLHDGESILAEVIAKAKEEKTTVISGVDAFRLYDTYGFPIELTEEYAEEAGMTVDQAGFENEMEKQRERARAARQDVDSMQVQGGVLGEVKVASEFVGYGTVATESNVVALVKNGEYTDSLQAGEEGQLMLDVTPFYAESGGQIADRGYLLADGVKVVVKDVQKAPNGQNLHKVVVEEGTLTKDAAVKAVIDTKNRSSVVKNHTATHLLHQALKDILGTHVNQAGSLVTSERLRFDFSHFGQVQADELEKIERIVNEKIWESIDVAISQKAIEEAKEMGAMALFGEKYGDVVRVVQVGDYSLELCGGCHVDNTASIGIFKIVAESGIGAGTRRIEAVTGKSAYELMNDQVGLLKEAAGKMKTNPKDILTRVDGLFTEVKQLQKENESLAAKLSNIEAGNLTDSVMTVDGVNVLAAKVNVADMNNLRTMMDDLKNKLESAVVVLASVNDDKVNILAGVTKDLISQGYHAGKLVKEVASRCGGGGGGRPDMAQAGGKNPAQVEEALAFVQEYVKSVSK.

Residues H567, H571, C669, and H673 each coordinate Zn(2+).

Belongs to the class-II aminoacyl-tRNA synthetase family. Requires Zn(2+) as cofactor.

The protein localises to the cytoplasm. It carries out the reaction tRNA(Ala) + L-alanine + ATP = L-alanyl-tRNA(Ala) + AMP + diphosphate. Catalyzes the attachment of alanine to tRNA(Ala) in a two-step reaction: alanine is first activated by ATP to form Ala-AMP and then transferred to the acceptor end of tRNA(Ala). Also edits incorrectly charged Ser-tRNA(Ala) and Gly-tRNA(Ala) via its editing domain. This is Alanine--tRNA ligase from Bacillus mycoides (strain KBAB4) (Bacillus weihenstephanensis).